The sequence spans 606 residues: UvrABC system protein C (606 aa).

The region spanning 19–97 (QSCGVYQMIG…IKSLKPPYNI (79 aa)) is the GIY-YIG domain. The 36-residue stretch at 207–242 (EKVKKQLSSTMEKCSKEENYELAAIYRDRLKFLEQI) folds into the UVR domain.

The protein belongs to the UvrC family. Interacts with UvrB in an incision complex.

It localises to the cytoplasm. Functionally, the UvrABC repair system catalyzes the recognition and processing of DNA lesions. UvrC both incises the 5' and 3' sides of the lesion. The N-terminal half is responsible for the 3' incision and the C-terminal half is responsible for the 5' incision. The chain is UvrABC system protein C from Wolbachia sp. subsp. Brugia malayi (strain TRS).